Here is a 142-residue protein sequence, read N- to C-terminus: Tol-Pal system protein TolR (142 aa).

Residues 1-17 (MARARGRGRRDLKSEIN) lie on the Cytoplasmic side of the membrane. A helical membrane pass occupies residues 18 to 38 (IVPLLDVLLVLLLIFMATAPI). The Periplasmic portion of the chain corresponds to 39–142 (ITQSVEVDLP…KSVGLMTQPI (104 aa)).

This sequence belongs to the ExbD/TolR family. As to quaternary structure, the Tol-Pal system is composed of five core proteins: the inner membrane proteins TolA, TolQ and TolR, the periplasmic protein TolB and the outer membrane protein Pal. They form a network linking the inner and outer membranes and the peptidoglycan layer.

It localises to the cell inner membrane. In terms of biological role, part of the Tol-Pal system, which plays a role in outer membrane invagination during cell division and is important for maintaining outer membrane integrity. Required, with TolQ, for the proton motive force-dependent activation of TolA and for TolA-Pal interaction. In Escherichia coli O157:H7, this protein is Tol-Pal system protein TolR.